A 778-amino-acid chain; its full sequence is Ribonucleoside-diphosphate reductase large subunit (778 aa).

Substrate-binding positions include serine 177, 192–193 (SC), glycine 221, 419–423 (NLCIE), and 613–617 (PTATS). The cysteines at positions 193 and 439 are disulfide-linked. The Proton acceptor role is filled by asparagine 419. The Cysteine radical intermediate role is filled by cysteine 421. Glutamate 423 (proton acceptor) is an active-site residue.

Belongs to the ribonucleoside diphosphate reductase large chain family. In terms of assembly, heterotetramer composed of a homodimer of the large subunit (R1) and a homodimer of the small subunit (R2). Larger multisubunit protein complex are also active, composed of (R1)n(R2)n.

The catalysed reaction is a 2'-deoxyribonucleoside 5'-diphosphate + [thioredoxin]-disulfide + H2O = a ribonucleoside 5'-diphosphate + [thioredoxin]-dithiol. Its activity is regulated as follows. Under complex allosteric control mediated by deoxynucleoside triphosphates and ATP binding. The type of nucleotide bound at the specificity site determines substrate preference. It seems probable that ATP makes the enzyme reduce CDP and UDP, dGTP favors ADP reduction and dTTP favors GDP reduction. Functionally, ribonucleoside-diphosphate reductase holoenzyme provides the precursors necessary for viral DNA synthesis. Allows virus growth in non-dividing cells. Catalyzes the biosynthesis of deoxyribonucleotides from the corresponding ribonucleotides. The polypeptide is Ribonucleoside-diphosphate reductase large subunit (Ornithodoros (relapsing fever ticks)).